Consider the following 916-residue polypeptide: MNRSQVEYQSEIVPDPLEQQIPEQLFEGLQVAENAVALTADTFSPDVFGALVSRFLTVFTDESNTPQGYYPIWDGYETNNLGNPGVFSGFINSILVAGTGNPNFHSDITDLLGDTGPGISSEHGYLLPGYGTRITRRQPIPLDMLEHARGTLVEARTSYGQDGRGPTYQSGNQSYVSALRSMFTGDVASSLIADERGGGHISGALANGLFNVAPVVYKTSEIGDTDTFKRRVSNAPSIGDIKLVINGQSGPDLKSEKDRIYQIPDDDRYVTKITSHCDLDDRKLIVEKVKLNVPRRIKISAHAKADYNTIVADSLRTALVAAFNGKVYDCLQLRSSEDHGPGVVIENMPLHEYPHKSMTLSGETTITAKARDEFVNVKFDTKSTSGTISIPITKMKFVFAGIMKYDPKSATYTYSATNVVTNIFDGDVGVARLRRSPIRVNKRSYDYNDDRNFRPESLKAEISMPYDRRNSGAVIHGLHNVLERYDLERKLETHDPWTGLPFSNSIMSPPGEDDNLLRYSGIEYDDIHAIYTSPSTFNGTILGLTSPSGKEIVERVADMCLHMLLSQHEVDLYGRDIIASTKLSDPKLSQAIKLIKARLQREIYDKSAITSMHDKLWFTNVNESVAPDDRIVVDIMLARYLLSLTHHIVYPISEDTYRSTLLLPPRINKAKYIPVSLSEEGYRVVTPTLSVVYSYFMKEPGSRQLLKQYISKDGNFKQDPQNKLDWLSAINRYEPRNFKELVNNSTQGRIELHAIVRAPLVEVTYESVLDGTYTHCIICDNCKIITLDYLIQSTVYQLCTKSESMDGVQSVLSKVHNNGGKLFVIYDKWFILLFVIPEKTDVPPIVFVQTSTRAARIVPHTKNTNSSLRRADAKYDYEVLMQSAVSCDLLYMSKTIEWSSGRRVGQLLRDRSVKYA.

This is an uncharacterized protein from Micromonas pusilla reovirus (isolate Netherlands/2005) (MpRV).